A 257-amino-acid polypeptide reads, in one-letter code: MRHLRDLPDEEIIIASGSEILELVVNATMGDDHPEPPTPFGTPSLHDLYDLEVDVPEDDPNEKAVNDLFSDAALLAAEEASSPSSDSDSSLHTPRHDRGEKEIPGLKWEKMDLRCYEECLPPSDDEDEQAIQNAASHGVQAVSESFALDCPPLPGHGCKSCEFHRINTGDKAVLCALCYMRAYNHCVYSPVSDADDETPTTESTLSPPEIGTSPSDNIVRPVPVRATGRRAAVECLDDLLQGGDEPLDLCTRKRPRH.

2 disordered regions span residues Asn-26–His-46 and Leu-75–Ile-103. An interaction with RB1 in competition with E2F1 region spans residues Pro-43 to Leu-51. The segment covering Leu-75–Leu-91 has biased composition (low complexity). The segment at Glu-79 to Glu-144 is interaction with UBE2I. Basic and acidic residues predominate over residues Pro-94–Ile-103. Positions Pro-104–Trp-108 match the PXLXP motif, interaction with host ZMYND11 motif. Positions Leu-113–Glu-117 match the LXCXE motif, interaction with host RB1 and TMEM173/STING motif. A zinc finger spans residues Cys-158–Cys-178. The tract at residues Val-191–Pro-221 is disordered. A compositionally biased stretch (low complexity) spans Thr-200–Glu-209. Positions Pro-246 to Cys-250 match the PXDLS motif, CTBP-binding motif. The Nuclear localization signal signature appears at Arg-252–His-257.

It belongs to the adenoviridae E1A protein family. As to quaternary structure, interacts with host UBE2I; this interaction interferes with polySUMOylation. Interacts with host RB1; this interaction induces the aberrant dissociation of RB1-E2F1 complex thereby disrupting the activity of RB1 and activating E2F1-regulated genes. Interacts with host ATF7; the interaction enhances ATF7-mediated viral transactivation activity which requires the zinc binding domains of both proteins. Isoform early E1A 32 kDa protein and isoform early E1A 26 kDa protein interact (via N-terminus) with CUL1 and E3 ubiquitin ligase RBX1; these interactions inhibit RBX1-CUL1-dependent elongation reaction of ubiquitin chains and attenuate ubiquitination of SCF(FBXW7) target proteins. Interacts (via PXLXP motif) with host ZMYND11/BS69 (via MYND-type zinc finger); this interaction inhibits E1A mediated transactivation. Interacts with host EP300; this interaction stimulates the acetylation of RB1 by recruiting EP300 and RB1 into a multimeric-protein complex. Interacts with host CTBP1 and CTBP2; this interaction seems to potentiate viral replication. Interacts with host DCAF7. Interacts with host DYRK1A. Interacts with host KPNA4; this interaction allows E1A import into the host nucleus. Interacts with host EP400; this interaction stabilizes MYC. Interacts with host TBP protein; this interaction probably disrupts the TBP-TATA complex. Interacts (via LXCXE motif) with host TMEM173/STING; this interaction impairs the ability of TMEM173/STING to sense cytosolic DNA and promote the production of type I interferon (IFN-alpha and IFN-beta). Interacts (via C-terminus) with host ZBED1/hDREF (via C-terminus); the interaction is direct.

Its subcellular location is the host nucleus. Plays a role in viral genome replication by driving entry of quiescent cells into the cell cycle. Stimulation of progression from G1 to S phase allows the virus to efficiently use the cellular DNA replicating machinery to achieve viral genome replication. E1A protein has both transforming and trans-activating activities. Induces the disassembly of the E2F1 transcription factor from RB1 by direct competition for the same binding site on RB1, with subsequent transcriptional activation of E2F1-regulated S-phase genes and of the E2 region of the adenoviral genome. Release of E2F1 leads to the ARF-mediated inhibition of MDM2 and causes TP53/p53 to accumulate because it is not targeted for degradation by MDM2-mediated ubiquitination anymore. This increase in TP53, in turn, would arrest the cell proliferation and direct its death but this effect is counteracted by the viral protein E1B-55K. Inactivation of the ability of RB1 to arrest the cell cycle is critical for cellular transformation, uncontrolled cellular growth and proliferation induced by viral infection. Interaction with RBX1 and CUL1 inhibits ubiquitination of the proteins targeted by SCF(FBXW7) ubiquitin ligase complex, and may be linked to unregulated host cell proliferation. The tumorigenesis-restraining activity of E1A may be related to the disruption of the host CtBP-CtIP complex through the CtBP binding motif. Interaction with host TMEM173/STING impairs the ability of TMEM173/STING to sense cytosolic DNA and promote the production of type I interferon (IFN-alpha and IFN-beta). Promotes the sumoylation of host ZBED1/hDREF with SUMO1. This Human adenovirus E serotype 4 (HAdV-4) protein is Early E1A protein.